The chain runs to 301 residues: Chitosanase (301 aa).

A signal peptide spans 1 to 42 (MHMSNARPSKSRTKFLLAFLCFTLMASLFGATALFGPSKAAA). Catalysis depends on E79, which acts as the Proton donor. C92 and C166 are oxidised to a cystine. D97 serves as the catalytic Nucleophile.

Belongs to the glycosyl hydrolase 46 family.

It localises to the secreted. It carries out the reaction Endohydrolysis of beta-(1-&gt;4)-linkages between D-glucosamine residues in a partly acetylated chitosan.. Aids in the defense against invading fungal pathogens by degrading their cell wall chitosan. The sequence is that of Chitosanase (csn) from Niallia circulans (Bacillus circulans).